The sequence spans 366 residues: DNA-directed RNA polymerase II subunit GRINL1A (366 aa).

The segment at 1–23 (MFSLPRGFEPPAPEDLGRQSSAE) is disordered. The stretch at 15–39 (DLGRQSSAELRERLRRQERLLRNEK) forms a coiled coil. The interval 29–68 (RRQERLLRNEKFICKLPDKGKKISDTVAKLKAAISEREEV) is important for transcription repressor activity. Disordered regions lie at residues 88–140 (ATTR…HRGN), 158–182 (IRAR…QEEE), 201–225 (ADQS…ETPK), and 237–280 (ARNP…RRAR). Positions 90 to 100 (TRADTDVDKAQ) are enriched in basic and acidic residues. Positions 101-127 (SSDLMLDTSSLDPDCSSIDIKSSKSTS) are enriched in low complexity. The segment at 225 to 296 (KKPHYMKVLE…TAARLLPLHH (72 aa)) is interaction with Pol II. The segment covering 251–272 (VLPTQQSDSPSHCQRGQSPASS) has biased composition (polar residues). The residue at position 268 (Ser-268) is a Phosphoserine. The important for transcription repressor activity stretch occupies residues 297 to 312 (LPAQLLSIEESLALQR). Positions 299-333 (AQLLSIEESLALQREQKQNYEEMQAKLAAQKLAER) form a coiled coil. An interaction with Pol II region spans residues 313–338 (EQKQNYEEMQAKLAAQKLAERLNIKM). The tract at residues 338 to 366 (MQSYNPEGESSGRYREVRDEADAQSSDEC) is disordered. Positions 347–358 (SSGRYREVRDEA) are enriched in basic and acidic residues.

Belongs to the GRINL1 family. Component of the Pol II(G) complex, which contains the RNA polymerase II (Pol II) core complex subunits and POLR2M isoform 1. Pol II(G) appears to be an abundant form of Pol II. Dephosphorylated at Ser-268 by the PNUTS-PP1 complex, promoting RNA polymerase II transcription pause-release.

The protein resides in the nucleus. In terms of biological role, appears to be a stable component of the Pol II(G) complex form of RNA polymerase II (Pol II). Pol II synthesizes mRNA precursors and many functional non-coding RNAs and is the central component of the basal RNA polymerase II transcription machinery. May play a role in the Mediator complex-dependent regulation of transcription activation. Acts as a negative regulator of transcriptional activation; this repression is relieved by the Mediator complex, which restores Pol II(G) activator-dependent transcription to a level equivalent to that of Pol II. This chain is DNA-directed RNA polymerase II subunit GRINL1A (Polr2m), found in Mus musculus (Mouse).